The chain runs to 380 residues: Putative S-(hydroxymethyl)glutathione dehydrogenase 2 (380 aa).

Residue Cys-50 participates in Zn(2+) binding. NAD(+) is bound at residue His-51. Positions 72, 73, 102, 105, 108, 116, and 179 each coordinate Zn(2+). Residues 204–209 (GLGSVG), Asp-228, and 297–299 (IGV) contribute to the NAD(+) site.

It belongs to the zinc-containing alcohol dehydrogenase family. Class-III subfamily. The cofactor is Zn(2+).

It carries out the reaction a primary alcohol + NAD(+) = an aldehyde + NADH + H(+). The enzyme catalyses a secondary alcohol + NAD(+) = a ketone + NADH + H(+). The catalysed reaction is S-(hydroxymethyl)glutathione + NADP(+) = S-formylglutathione + NADPH + H(+). It catalyses the reaction S-(hydroxymethyl)glutathione + NAD(+) = S-formylglutathione + NADH + H(+). It carries out the reaction S-nitrosoglutathione + NADH + H(+) = S-(hydroxysulfenamide)glutathione + NAD(+). Its function is as follows. Oxidizes long-chain alcohols and, in the presence of glutathione, is able to oxidize formaldehyde. Also acts as a S-nitroso-glutathione reductase by catalyzing the NADH-dependent reduction of S-nitrosoglutathione, thereby regulating protein S-nitrosylation. The polypeptide is Putative S-(hydroxymethyl)glutathione dehydrogenase 2 (Schizosaccharomyces pombe (strain 972 / ATCC 24843) (Fission yeast)).